The following is a 443-amino-acid chain: Signal recognition particle 54 kDa protein (443 aa).

Residues 107 to 114, 189 to 193, and 247 to 250 contribute to the GTP site; these read GIQGSGKT, DTAGR, and TKLD.

Belongs to the GTP-binding SRP family. SRP54 subfamily. In terms of assembly, part of the signal recognition particle protein translocation system, which is composed of SRP and FtsY. Archaeal SRP consists of a 7S RNA molecule of 300 nucleotides and two protein subunits: SRP54 and SRP19.

It is found in the cytoplasm. The catalysed reaction is GTP + H2O = GDP + phosphate + H(+). Involved in targeting and insertion of nascent membrane proteins into the cytoplasmic membrane. Binds to the hydrophobic signal sequence of the ribosome-nascent chain (RNC) as it emerges from the ribosomes. The SRP-RNC complex is then targeted to the cytoplasmic membrane where it interacts with the SRP receptor FtsY. In Pyrococcus furiosus (strain ATCC 43587 / DSM 3638 / JCM 8422 / Vc1), this protein is Signal recognition particle 54 kDa protein.